Reading from the N-terminus, the 458-residue chain is ATP synthase subunit beta (458 aa).

An ATP-binding site is contributed by 148 to 155 (GGAGVGKT).

It belongs to the ATPase alpha/beta chains family. As to quaternary structure, F-type ATPases have 2 components, CF(1) - the catalytic core - and CF(0) - the membrane proton channel. CF(1) has five subunits: alpha(3), beta(3), gamma(1), delta(1), epsilon(1). CF(0) has three main subunits: a(1), b(2) and c(9-12). The alpha and beta chains form an alternating ring which encloses part of the gamma chain. CF(1) is attached to CF(0) by a central stalk formed by the gamma and epsilon chains, while a peripheral stalk is formed by the delta and b chains.

The protein resides in the cell inner membrane. It carries out the reaction ATP + H2O + 4 H(+)(in) = ADP + phosphate + 5 H(+)(out). Functionally, produces ATP from ADP in the presence of a proton gradient across the membrane. The catalytic sites are hosted primarily by the beta subunits. The chain is ATP synthase subunit beta from Francisella philomiragia subsp. philomiragia (strain ATCC 25017 / CCUG 19701 / FSC 153 / O#319-036).